The sequence spans 142 residues: Large ribosomal subunit protein uL13 (142 aa).

Belongs to the universal ribosomal protein uL13 family. In terms of assembly, part of the 50S ribosomal subunit.

In terms of biological role, this protein is one of the early assembly proteins of the 50S ribosomal subunit, although it is not seen to bind rRNA by itself. It is important during the early stages of 50S assembly. The chain is Large ribosomal subunit protein uL13 from Delftia acidovorans (strain DSM 14801 / SPH-1).